A 259-amino-acid chain; its full sequence is 5'-nucleotidase SurE 1 (259 aa).

4 residues coordinate a divalent metal cation: Asp-16, Asp-17, Ser-48, and Asn-101.

It belongs to the SurE nucleotidase family. A divalent metal cation serves as cofactor.

The protein resides in the cytoplasm. It catalyses the reaction a ribonucleoside 5'-phosphate + H2O = a ribonucleoside + phosphate. Functionally, nucleotidase that shows phosphatase activity on nucleoside 5'-monophosphates. This chain is 5'-nucleotidase SurE 1, found in Burkholderia lata (strain ATCC 17760 / DSM 23089 / LMG 22485 / NCIMB 9086 / R18194 / 383).